The primary structure comprises 150 residues: Toxin coregulated pilus biosynthesis protein Q (150 aa).

Involved in TCP pilus biogenesis. The polypeptide is Toxin coregulated pilus biosynthesis protein Q (tcpQ) (Vibrio cholerae serotype O1 (strain ATCC 39315 / El Tor Inaba N16961)).